The sequence spans 327 residues: MAMTIEVKDELSRLAVKSISARRAEVTSLLRFAGGLHIVGGRVVIEAEVDLENIARRLRKDIFDLYGYNAVVHVLSASGIRKSVRYVLRVANDGEALARQTGLLDMRGRPVRGLPAQVVGGSLIDAEAVWRGAFLAHGSLTEPGRSSALEVSCPGLEAALALVGAARKLGVNAKAREVRGADRVVVRDGEAIGVLLTRMGAQDTRLVWEERRMRREVRATANRLANFDDANLRRSARAAIAAAARAERALEILGDTVPDHLASAGKLRVEYRQASLEELGRLADPPMTKDAVAGRIRRLLSMADRKAKVEGIPDTESAVTPDLLEDA.

The H-T-H motif DNA-binding region spans 275–308 (SLEELGRLADPPMTKDAVAGRIRRLLSMADRKAK).

It belongs to the WhiA family.

Its function is as follows. Involved in cell division and chromosome segregation. This is Probable cell division protein WhiA from Mycobacterium leprae (strain Br4923).